We begin with the raw amino-acid sequence, 227 residues long: PKHD-type hydroxylase CC_0027 (227 aa).

The 101-residue stretch at 78-178 (TILSPMFNRY…RTASFFWIQS (101 aa)) folds into the Fe2OG dioxygenase domain. His-96, Asp-98, and His-159 together coordinate Fe cation. Arg-169 is a 2-oxoglutarate binding site.

The cofactor is Fe(2+). Requires L-ascorbate as cofactor.

The chain is PKHD-type hydroxylase CC_0027 from Caulobacter vibrioides (strain ATCC 19089 / CIP 103742 / CB 15) (Caulobacter crescentus).